Consider the following 89-residue polypeptide: Small ribosomal subunit protein uS15 (89 aa).

The protein belongs to the universal ribosomal protein uS15 family. Part of the 30S ribosomal subunit. Forms a bridge to the 50S subunit in the 70S ribosome, contacting the 23S rRNA.

One of the primary rRNA binding proteins, it binds directly to 16S rRNA where it helps nucleate assembly of the platform of the 30S subunit by binding and bridging several RNA helices of the 16S rRNA. In terms of biological role, forms an intersubunit bridge (bridge B4) with the 23S rRNA of the 50S subunit in the ribosome. The sequence is that of Small ribosomal subunit protein uS15 from Micrococcus luteus (strain ATCC 4698 / DSM 20030 / JCM 1464 / CCM 169 / CCUG 5858 / IAM 1056 / NBRC 3333 / NCIMB 9278 / NCTC 2665 / VKM Ac-2230) (Micrococcus lysodeikticus).